Reading from the N-terminus, the 362-residue chain is UPF0283 membrane protein Arad_2632 (362 aa).

A compositionally biased stretch (basic and acidic residues) spans 1–11 (MTKPTEDDPKG). The segment at 1–47 (MTKPTEDDPKGISRRPAAFSLEQEASREGAHTKTTAETPRRKPQSFD) is disordered. Transmembrane regions (helical) follow at residues 82–102 (FSFG…AFGL) and 118–138 (LGYT…AIVV).

This sequence belongs to the UPF0283 family.

The protein resides in the cell inner membrane. The sequence is that of UPF0283 membrane protein Arad_2632 from Rhizobium rhizogenes (strain K84 / ATCC BAA-868) (Agrobacterium radiobacter).